The primary structure comprises 280 residues: Diaminopimelate epimerase (280 aa).

Residues Asn-15 and Asn-66 each contribute to the substrate site. The active-site Proton donor is Cys-75. Residues 76 to 77, Asn-163, Asn-196, and 214 to 215 each bind substrate; these read GN and ER. The active-site Proton acceptor is the Cys-223. 224-225 lines the substrate pocket; it reads GT.

This sequence belongs to the diaminopimelate epimerase family. In terms of assembly, homodimer.

It is found in the cytoplasm. It carries out the reaction (2S,6S)-2,6-diaminopimelate = meso-2,6-diaminopimelate. It functions in the pathway amino-acid biosynthesis; L-lysine biosynthesis via DAP pathway; DL-2,6-diaminopimelate from LL-2,6-diaminopimelate: step 1/1. In terms of biological role, catalyzes the stereoinversion of LL-2,6-diaminopimelate (L,L-DAP) to meso-diaminopimelate (meso-DAP), a precursor of L-lysine and an essential component of the bacterial peptidoglycan. This chain is Diaminopimelate epimerase, found in Phocaeicola vulgatus (strain ATCC 8482 / DSM 1447 / JCM 5826 / CCUG 4940 / NBRC 14291 / NCTC 11154) (Bacteroides vulgatus).